The primary structure comprises 303 residues: Glycine--tRNA ligase alpha subunit (303 aa).

This sequence belongs to the class-II aminoacyl-tRNA synthetase family. In terms of assembly, tetramer of two alpha and two beta subunits.

The protein localises to the cytoplasm. It catalyses the reaction tRNA(Gly) + glycine + ATP = glycyl-tRNA(Gly) + AMP + diphosphate. The chain is Glycine--tRNA ligase alpha subunit from Escherichia fergusonii (strain ATCC 35469 / DSM 13698 / CCUG 18766 / IAM 14443 / JCM 21226 / LMG 7866 / NBRC 102419 / NCTC 12128 / CDC 0568-73).